A 561-amino-acid chain; its full sequence is Zinc finger protein 37A (561 aa).

The KRAB domain occupies 8-79 (VSFRDVTVGF…EEKFPSQSHL (72 aa)). The C2H2-type 1; degenerate zinc-finger motif lies at 146–168 (FEYNECGKAFPENSLFLVHKRGY). The C2H2-type 2; degenerate zinc-finger motif lies at 243–265 (IEYNECGTFFSEKLVLHLQQRTH). C2H2-type zinc fingers lie at residues 271-293 (YECH…QRTH), 299-321 (YECH…QRIH), 327-349 (YGCH…QRTH), 355-377 (YECH…QKTH), 383-405 (YECY…QRIH), 411-433 (YECN…LRTH), 439-461 (YECI…LRRH), 467-489 (FGCN…QRTH), 495-517 (YGCN…HRTH), and 523-545 (YECN…QRIH).

This sequence belongs to the krueppel C2H2-type zinc-finger protein family.

Its subcellular location is the nucleus. Its function is as follows. May be involved in transcriptional regulation. This is Zinc finger protein 37A (ZNF37A) from Homo sapiens (Human).